An 887-amino-acid chain; its full sequence is Phosphatidylinositol 3-kinase catalytic subunit type 3 (887 aa).

Residues 35-184 (YKAVLEDPML…LAKLTKAHRQ (150 aa)) enclose the C2 PI3K-type domain. Positions 150 to 170 (EADGSEPTKTPGRTSSTLSED) are disordered. Residues 156-170 (PTKTPGRTSSTLSED) show a composition bias toward polar residues. Threonine 163 carries the phosphothreonine; by AMPK modification. Phosphoserine; by AMPK is present on serine 165. A phosphoserine mark is found at serine 244, serine 261, and serine 282. Residues 282 to 520 (SDHGLKPNAA…PKTHEMYLNV (239 aa)) enclose the PIK helical domain. Disordered stretches follow at residues 416–435 (EPTKKESQGSVSESVSNSGI) and 446–468 (ITSPLPPVSSPPPASKTKESSDG). Positions 423–435 (QGSVSESVSNSGI) are enriched in low complexity. Residues 449-459 (PLPPVSSPPPA) are compositionally biased toward pro residues. Residues 605-871 (IPETATLFKS…LIDESVHALF (267 aa)) form the PI3K/PI4K catalytic domain. Residues 611–617 (LFKSALM) form a G-loop region. The tract at residues 740-748 (GVGDRHLDN) is catalytic loop. The activation loop stretch occupies residues 759-780 (HIDFGYILGRDPKPLPPPMKLN).

The protein belongs to the PI3/PI4-kinase family. As to quaternary structure, component of the PI3K (PI3KC3/PI3K-III/class III phosphatidylinositol 3-kinase) complex the core of which is composed of the catalytic subunit PIK3C3, the regulatory subunit PIK3R4 and BECN1 associating with additional regulatory/auxiliary subunits to form alternative complex forms. Alternative complex forms containing a fourth regulatory subunit in a mutually exclusive manner are: the PI3K complex I (PI3KC3-C1) containing ATG14, and the PI3K complex II (PI3KC3-C2) containing UVRAG. PI3KC3-C1 displays a V-shaped architecture with PIK3R4 serving as a bridge between PIK3C3 and the ATG14:BECN1 subcomplex. Both, PI3KC3-C1 and PI3KC3-C2, can associate with further regulatory subunits such as RUBCN, SH3GLB1/Bif-1 and AMBRA1. PI3KC3-C1 probably associates with PIK3CB. Interacts with RAB7A in the presence of PIK3R4. Interacts with AMBRA1. Interacts with BECN1P1/BECN2. Interacts with SLAMF1. May be a component of a complex composed of RAB5A (in GDP-bound form), DYN2 and PIK3C3. Interacts with NCKAP1L. Interacts with ATG14; this interaction is increased in the absence of TMEM39A. Interacts with STEEP1; the interaction is STING1-dependent and required for trafficking of STING1 from the endoplasmic reticulum. Interacts with YWHAG. Interacts with ARMC3. Mn(2+) is required as a cofactor. In terms of processing, ubiquitinated via 'Lys-29'- and 'Lys-48'-linked ubiquitination by UBE3C, promoting its degradation. Deubiquitination by ZRANB1/TRABID promotes its stabilization, leading to autophagosome maturation.

Its subcellular location is the midbody. It localises to the late endosome. The protein resides in the cytoplasmic vesicle. It is found in the autophagosome. The catalysed reaction is a 1,2-diacyl-sn-glycero-3-phospho-(1D-myo-inositol) + ATP = a 1,2-diacyl-sn-glycero-3-phospho-(1D-myo-inositol-3-phosphate) + ADP + H(+). In terms of biological role, catalytic subunit of the PI3K complex that mediates formation of phosphatidylinositol 3-phosphate; different complex forms are believed to play a role in multiple membrane trafficking pathways: PI3KC3-C1 is involved in initiation of autophagosomes and PI3KC3-C2 in maturation of autophagosomes and endocytosis. As part of PI3KC3-C1, promotes endoplasmic reticulum membrane curvature formation prior to vesicle budding. Involved in regulation of degradative endocytic trafficking and required for the abscission step in cytokinesis, probably in the context of PI3KC3-C2. Involved in the transport of lysosomal enzyme precursors to lysosomes. Required for transport from early to late endosomes. In Sus scrofa (Pig), this protein is Phosphatidylinositol 3-kinase catalytic subunit type 3.